Reading from the N-terminus, the 214-residue chain is Adenylate kinase (214 aa).

10–15 serves as a coordination point for ATP; the sequence is GAGKGT. Residues 30 to 59 form an NMP region; the sequence is STGDILRAAVKDMTPMGGKAKSFMDAGALV. Residues T31, R36, 57–59, 85–88, and Q92 contribute to the AMP site; these read ALV and GFPR. Positions 126 to 163 are LID; the sequence is GRRTCRNCGKGFHVSFDPPKSSGICDECSGELYQRDDD. R127 provides a ligand contact to ATP. Residues C130, C133, C150, and C153 each coordinate Zn(2+). AMP-binding residues include R160 and R171. G199 contributes to the ATP binding site.

Belongs to the adenylate kinase family. Monomer.

It is found in the cytoplasm. The enzyme catalyses AMP + ATP = 2 ADP. The protein operates within purine metabolism; AMP biosynthesis via salvage pathway; AMP from ADP: step 1/1. Its function is as follows. Catalyzes the reversible transfer of the terminal phosphate group between ATP and AMP. Plays an important role in cellular energy homeostasis and in adenine nucleotide metabolism. This Geotalea daltonii (strain DSM 22248 / JCM 15807 / FRC-32) (Geobacter daltonii) protein is Adenylate kinase.